The sequence spans 338 residues: Egl nine homolog 1 (338 aa).

Over residues 1 to 11 (PRAQPAPAQPR) the composition is skewed to low complexity. Residues 1–99 (PRAQPAPAQP…PSGGLRPNGQ (99 aa)) are disordered. S52 carries the phosphoserine modification. S-nitrosocysteine is present on residues C116 and C123. The tract at residues 156–166 (VSQKSDSSKDI) is beta(2)beta(3) 'finger-like' loop. The Fe2OG dioxygenase domain occupies 209–307 (GRTKAMVACY…RYAITVWYFD (99 aa)). An S-nitrosocysteine modification is found at C217. Fe cation is bound by residues H228 and D230. Residues C238 and C241 each carry the S-nitrosocysteine modification. H289 lines the Fe cation pocket. R298 is a binding site for 2-oxoglutarate.

In terms of assembly, monomer. Interacts with ING4; the interaction inhibits the hydroxylation of HIF alpha proteins. Interacts with PTGES3 (via PXLE motif); thereby recruiting EGLN1 to the HSP90 pathway to facilitate HIF alpha proteins hydroxylation. Interacts with LIMD1. Found in a complex composed of LIMD1, VHL, EGLN1/PHD2, ELOB and CUL2. Interacts with EPAS1. Interacts with CBFA2T3 and HIF1A. It depends on Fe(2+) as a cofactor. The cofactor is L-ascorbate. S-nitrosylation inhibits the enzyme activity up to 60% under aerobic conditions. Chelation of Fe(2+) has no effect on the S-nitrosylation. It is uncertain whether nitrosylation occurs on Cys-238 or Cys-241. Expressed in heart, liver, kidney, brain, liver and testis. Highest levels in heart, lowest in liver.

The protein localises to the cytoplasm. It is found in the nucleus. The catalysed reaction is L-prolyl-[hypoxia-inducible factor alpha subunit] + 2-oxoglutarate + O2 = trans-4-hydroxy-L-prolyl-[hypoxia-inducible factor alpha subunit] + succinate + CO2. Increased activation in hypoxia. Hydroxylation of the C-terminal ODD domain (CODD) proline of HIF1A is activated by cyclosporin A (CsA). Its function is as follows. Cellular oxygen sensor that catalyzes, under normoxic conditions, the post-translational formation of 4-hydroxyproline in hypoxia-inducible factor (HIF) alpha proteins. Hydroxylates a specific proline found in each of the oxygen-dependent degradation (ODD) domains (N-terminal, NODD, and C-terminal, CODD) of HIF1A. Also hydroxylates HIF2A. Has a preference for the CODD site for both HIF1A and HIF1B. Hydroxylated HIFs are then targeted for proteasomal degradation via the von Hippel-Lindau ubiquitination complex. Under hypoxic conditions, the hydroxylation reaction is attenuated allowing HIFs to escape degradation resulting in their translocation to the nucleus, heterodimerization with HIF1B, and increased expression of hypoxy-inducible genes. EGLN1 is the most important isozyme under normoxia and, through regulating the stability of HIF1, involved in various hypoxia-influenced processes such as angiogenesis in retinal and cardiac functionality. Target proteins are preferentially recognized via a LXXLAP motif. This is Egl nine homolog 1 (Egln1) from Rattus norvegicus (Rat).